The following is a 442-amino-acid chain: Citrate transporter CitP (442 aa).

The next 13 membrane-spanning stretches (helical) occupy residues Ile27–Ser47, Ile59–Phe79, Leu83–Ile103, Phe114–Phe134, Val151–Gly171, Ala177–Leu197, Ser209–Ile229, Tyr267–Leu287, Gly293–Leu313, Val321–Gly341, Val349–Ile369, Ala387–Ala409, and Met421–Met441.

It belongs to the 2-hydroxycarboxylate transporter (2-HCT) (TC 2.A.24) family.

Its subcellular location is the cell membrane. It carries out the reaction (R)-lactate(in) + citrate(out) = (R)-lactate(out) + citrate(in). The catalysed reaction is (S)-lactate(in) + citrate(out) = (S)-lactate(out) + citrate(in). It catalyses the reaction citrate(in) + H(+)(in) = citrate(out) + H(+)(out). The transport of citrate is unaffected by the presence of citrate in the growth media. Functionally, secondary transporter involved in citrate metabolism. During cometabolism of citrate and glucose, catalyzes the uptake of divalent citrate into the cell coupled to the exit of monovalent lactate, the end product of glycolysis in L.lactis. The citrate/lactate exchange is electrogenic and results in the generation of a membrane potential. Plays an important role in resistance against lactate toxicity at low pH. In the absence of glucose, i.e. when no lactate is produced, CitP catalyzes the uptake of citrate in exchange with the citrate metabolism intermediates pyruvate and alpha-acetolactate, and the end product acetate. In the absence of glucose, CitP can also catalyze the proton-dependent transport of citrate. In vitro, shows a broad substrate specificity. Can transport a wide variety of mono- and dicarboxylates of the form X-CR(2)-COO(-), where X represents OH (2-hydroxy acid), O (2-keto acid), or H (acid) and R groups differ in size, hydrophobicity and composition. Many of the substrates are intermediates or products of amino acid metabolism, suggesting that CitP may have a broader physiological function than its role in citrate metabolism. The polypeptide is Citrate transporter CitP (Lactococcus lactis subsp. lactis (Streptococcus lactis)).